A 471-amino-acid polypeptide reads, in one-letter code: Glutamate--tRNA ligase (471 aa).

The 'HIGH' region signature appears at 9–19; sequence PSPTGYLHVGG. Residues Cys-98, Cys-100, Cys-125, and His-127 each coordinate Zn(2+). The short motif at 237 to 241 is the 'KMSKS' region element; sequence KLSKR. Position 240 (Lys-240) interacts with ATP.

It belongs to the class-I aminoacyl-tRNA synthetase family. Glutamate--tRNA ligase type 1 subfamily. As to quaternary structure, monomer. Zn(2+) serves as cofactor.

It is found in the cytoplasm. The catalysed reaction is tRNA(Glu) + L-glutamate + ATP = L-glutamyl-tRNA(Glu) + AMP + diphosphate. Catalyzes the attachment of glutamate to tRNA(Glu) in a two-step reaction: glutamate is first activated by ATP to form Glu-AMP and then transferred to the acceptor end of tRNA(Glu). In Salmonella choleraesuis (strain SC-B67), this protein is Glutamate--tRNA ligase.